A 380-amino-acid chain; its full sequence is DNA primase small subunit PriS (380 aa).

Catalysis depends on residues D103, D105, and D284.

It belongs to the eukaryotic-type primase small subunit family. Heterodimer of a small subunit (PriS) and a large subunit (PriL). The cofactor is Mg(2+). Requires Mn(2+) as cofactor.

Its function is as follows. Catalytic subunit of DNA primase, an RNA polymerase that catalyzes the synthesis of short RNA molecules used as primers for DNA polymerase during DNA replication. The small subunit contains the primase catalytic core and has DNA synthesis activity on its own. Binding to the large subunit stabilizes and modulates the activity, increasing the rate of DNA synthesis while decreasing the length of the DNA fragments, and conferring RNA synthesis capability. The DNA polymerase activity may enable DNA primase to also catalyze primer extension after primer synthesis. May also play a role in DNA repair. The chain is DNA primase small subunit PriS from Methanocorpusculum labreanum (strain ATCC 43576 / DSM 4855 / Z).